A 634-amino-acid chain; its full sequence is Pheromone-processing carboxypeptidase KEX1 (634 aa).

The signal sequence occupies residues 1 to 24 (MKLAMRRASTFALLALSWSAAVSA). At 25 to 512 (ASSAGDYFVR…DEAKWYAYRK (488 aa)) the chain is on the lumenal side. Residues S177 and D378 contribute to the active site. Residue N429 is glycosylated (N-linked (GlcNAc...) asparagine). H440 is a catalytic residue. The disordered stretch occupies residues 468 to 498 (NPTDSRLDGEKLPETTVGGAAGNSTSKQEEE). The N-linked (GlcNAc...) asparagine glycan is linked to N490. A helical transmembrane segment spans residues 513-533 (SGEVVLVIVAVAAVAWGWYVW). Over 534-634 (RDRRRRRGYQ…EGGPSGGRGR (101 aa)) the chain is Cytoplasmic. The segment at 542–634 (YQGIFGGSPS…EGGPSGGRGR (93 aa)) is disordered.

It belongs to the peptidase S10 family.

Its subcellular location is the golgi apparatus. The protein resides in the trans-Golgi network membrane. The enzyme catalyses Preferential release of a C-terminal arginine or lysine residue.. In terms of biological role, protease with a carboxypeptidase B-like function involved in the C-terminal processing of the lysine and arginine residues from protein precursors. Promotes cell fusion and is involved in the programmed cell death. This Pyricularia oryzae (strain 70-15 / ATCC MYA-4617 / FGSC 8958) (Rice blast fungus) protein is Pheromone-processing carboxypeptidase KEX1 (KEX1).